The primary structure comprises 865 residues: Bifunctional uridylyltransferase/uridylyl-removing enzyme (865 aa).

The uridylyltransferase stretch occupies residues 1-318 (MPHVDLNPLK…FPRPDSDARL (318 aa)). Residues 319–675 (IDDDFRNLRE…VRPTEHGEGL (357 aa)) form a uridylyl-removing region. One can recognise an HD domain in the interval 437–559 (VDQHTLAVVR…VGDERRLAAL (123 aa)). 2 ACT domains span residues 676 to 762 (QVMV…RLPH) and 789 to 865 (RLSV…QQAA). Positions 747 to 767 (DPHAARHAHAPRRLPHSHARR) are disordered. Residues 751-767 (ARHAHAPRRLPHSHARR) show a composition bias toward basic residues.

Belongs to the GlnD family. Mg(2+) is required as a cofactor.

It catalyses the reaction [protein-PII]-L-tyrosine + UTP = [protein-PII]-uridylyl-L-tyrosine + diphosphate. It carries out the reaction [protein-PII]-uridylyl-L-tyrosine + H2O = [protein-PII]-L-tyrosine + UMP + H(+). With respect to regulation, uridylyltransferase (UTase) activity is inhibited by glutamine, while glutamine activates uridylyl-removing (UR) activity. Its function is as follows. Modifies, by uridylylation and deuridylylation, the PII regulatory proteins (GlnB and homologs), in response to the nitrogen status of the cell that GlnD senses through the glutamine level. Under low glutamine levels, catalyzes the conversion of the PII proteins and UTP to PII-UMP and PPi, while under higher glutamine levels, GlnD hydrolyzes PII-UMP to PII and UMP (deuridylylation). Thus, controls uridylylation state and activity of the PII proteins, and plays an important role in the regulation of nitrogen assimilation and metabolism. In Bordetella bronchiseptica (strain ATCC BAA-588 / NCTC 13252 / RB50) (Alcaligenes bronchisepticus), this protein is Bifunctional uridylyltransferase/uridylyl-removing enzyme.